The following is a 215-amino-acid chain: Negative modulator of initiation of replication (215 aa).

The interval 71–93 (AETPKPSSEQEIRTPARKQSTQS) is disordered. The interval 181–187 (NTNSGRK) is interaction with DNA.

This sequence belongs to the SeqA family. In terms of assembly, homodimer. Polymerizes to form helical filaments.

Its subcellular location is the cytoplasm. Its function is as follows. Negative regulator of replication initiation, which contributes to regulation of DNA replication and ensures that replication initiation occurs exactly once per chromosome per cell cycle. Binds to pairs of hemimethylated GATC sequences in the oriC region, thus preventing assembly of replication proteins and re-initiation at newly replicated origins. Repression is relieved when the region becomes fully methylated. The chain is Negative modulator of initiation of replication from Mannheimia succiniciproducens (strain KCTC 0769BP / MBEL55E).